The following is a 616-amino-acid chain: Zinc metalloproteinase-disintegrin-like ecarin (616 aa).

Residues 1–20 (MIQILLVIICLAVFPYQGCS) form the signal peptide. Positions 21–190 (IILGSGNVND…EPIKKTLGLI (170 aa)) are excised as a propeptide. The 197-residue stretch at 201–397 (KFIELVVVVD…YNPKCILDPP (197 aa)) folds into the Peptidase M12B domain. Residue glutamate 204 participates in Ca(2+) binding. N-linked (GlcNAc...) asparagine glycans are attached at residues asparagine 219 and asparagine 261. Residue aspartate 288 coordinates Ca(2+). 2 N-linked (GlcNAc...) asparagine glycosylation sites follow: asparagine 295 and asparagine 326. 3 disulfide bridges follow: cysteine 312-cysteine 392, cysteine 352-cysteine 376, and cysteine 354-cysteine 359. Zn(2+) is bound at residue histidine 337. Residue glutamate 338 is part of the active site. Residues histidine 341 and histidine 347 each contribute to the Zn(2+) site. The Ca(2+) site is built by cysteine 392, valine 407, asparagine 410, isoleucine 412, glutamate 414, glutamate 417, and aspartate 420. A Disintegrin domain is found at 405-491 (PAVCGNEIWE…ECPRNEFQRN (87 aa)). Disulfide bonds link cysteine 408/cysteine 437, cysteine 419/cysteine 432, cysteine 421/cysteine 427, cysteine 431/cysteine 454, cysteine 445/cysteine 451, cysteine 450/cysteine 476, cysteine 463/cysteine 483, cysteine 470/cysteine 502, cysteine 495/cysteine 507, cysteine 514/cysteine 567, cysteine 529/cysteine 578, cysteine 542/cysteine 555, cysteine 562/cysteine 604, and cysteine 598/cysteine 609. A D/ECD-tripeptide motif is present at residues 469–471 (DCD). Residues aspartate 471, valine 472, and asparagine 486 each coordinate Ca(2+). Residue asparagine 497 is glycosylated (N-linked (GlcNAc...) asparagine).

Belongs to the venom metalloproteinase (M12B) family. P-III subfamily. P-IIIa sub-subfamily. As to quaternary structure, monomer. It depends on Zn(2+) as a cofactor. In terms of tissue distribution, expressed by the venom gland.

It localises to the secreted. In terms of biological role, snake venom zinc metalloproteinase that catalyzes the conversion of prothrombin (F2) to alpha-thrombin through formation of a thrombin intermediate, thereby functioning as a procoagulant protein. Has a low Km for prothrombin and a high kcat. Cleaves the 320-Arg-Ile-321 bond in prothrombin and produces meizothrombin which is ultimately converted to alpha-thrombin by autolysis. This chain is Zinc metalloproteinase-disintegrin-like ecarin, found in Echis carinatus (Saw-scaled viper).